The sequence spans 480 residues: Selenium-binding protein 3 (480 aa).

2 residues coordinate selenite: C12 and C13.

It belongs to the selenium-binding protein family. As to expression, expressed in young seedlings, mostly in roots.

The sequence is that of Selenium-binding protein 3 (SBP3) from Arabidopsis thaliana (Mouse-ear cress).